Reading from the N-terminus, the 39-residue chain is U1-ectatotoxin-Et1b subunit A (39 aa).

The cysteines at positions 14 and 35 are disulfide-linked.

It belongs to the ectatomin family. Ectatomin-Et subfamily. Heterodimer of subunits A and B; disulfide-linked. In terms of tissue distribution, expressed by the venom gland.

The protein resides in the secreted. Its subcellular location is the target cell membrane. The polypeptide is U1-ectatotoxin-Et1b subunit A (Ectatomma tuberculatum (Selva ant)).